Consider the following 365-residue polypeptide: Alanine racemase (365 aa).

The Proton acceptor; specific for D-alanine role is filled by Lys32. Lys32 is modified (N6-(pyridoxal phosphate)lysine). Arg128 is a binding site for substrate. Tyr257 (proton acceptor; specific for L-alanine) is an active-site residue. Met305 provides a ligand contact to substrate.

The protein belongs to the alanine racemase family. Pyridoxal 5'-phosphate is required as a cofactor.

It carries out the reaction L-alanine = D-alanine. Its pathway is amino-acid biosynthesis; D-alanine biosynthesis; D-alanine from L-alanine: step 1/1. Its function is as follows. Catalyzes the interconversion of L-alanine and D-alanine. May also act on other amino acids. The sequence is that of Alanine racemase (alr) from Francisella tularensis subsp. novicida (strain U112).